A 333-amino-acid chain; its full sequence is Taste receptor type 2 member 123 (333 aa).

At 1-14 (MFSQKTNYSHLFTF) the chain is on the extracellular side. The chain crosses the membrane as a helical span at residues 15 to 37 (SIIFYVEIVTGILGNGFIALVNI). Over 38–57 (MDWLKRRRISTADQILTALA) the chain is Cytoplasmic. A helical membrane pass occupies residues 58–77 (LTRLIYVWSVLICILLLFLC). At 78-91 (PHLSMRPEMFTAIG) the chain is on the extracellular side. The chain crosses the membrane as a helical span at residues 92–114 (VIWVVDNHFSIWLATCLGVFYFL). Residues 115–133 (KIASFSNSLFLYLKWRVKK) are Cytoplasmic-facing. Residues 134 to 156 (VVLMIILISLIFLMLNISSLGMY) form a helical membrane-spanning segment. Residues 157–204 (DHFSIDVYEGNMSYNLVDSTHFPRIFLFTNSSKVFLIANSSHVFLPIN) lie on the Extracellular side of the membrane. N-linked (GlcNAc...) asparagine glycosylation is found at N167, N186, and N195. Residues 205–227 (SLFMLIPFTVSLVAFFVLFLSLW) form a helical membrane-spanning segment. Residues 228–250 (KHHKKMQVNAKGPRDASTMAHTK) are Cytoplasmic-facing. Residues 251–273 (ALQIGFSFLLLYAIYLLFIITGI) form a helical membrane-spanning segment. The Extracellular segment spans residues 274-282 (LNLDLMRCI). A helical membrane pass occupies residues 283-305 (VILLFDHISGAVFSISHSFVLIL). Topologically, residues 306–333 (GNSKLRQATLSVLPCLRCRSKDMDTVVF) are cytoplasmic.

It belongs to the G-protein coupled receptor T2R family. In terms of tissue distribution, expressed in subsets of taste receptor cells of the tongue and palate epithelium and exclusively in gustducin-positive cells. Expressed in the antrum and fundus (part of the stomach), duodenum and in gastric endocrine cells.

The protein resides in the membrane. Gustducin-coupled receptor implicated in the perception of bitter compounds in the oral cavity and the gastrointestinal tract. Signals through PLCB2 and the calcium-regulated cation channel TRPM5. The protein is Taste receptor type 2 member 123 (Tas2r123) of Rattus norvegicus (Rat).